Here is a 297-residue protein sequence, read N- to C-terminus: MHTPVLLNEMLDILNPQDGKVYVDATFGAGGYTRAILKSANCQVYAIDQDECTNVFYEKLVNDFPGKVHFCVSKFSKIKQILHGAQLKKVDGIVFDIGVSSMQLEDASRGFSFSKDGPLDMRMSTSISNVDASVFVNTAFEEEIANVIYQYGGEKYSRKIAKAIAESRKKKPIKTTGELASIVRSVISRSKNHSIDPATRTFQAIRIWVNKELEELEQGIIDSADLLNPGGKIIVVSFHSLEDRIVKVMFKSLCSGSSVISPIGFQLINKKVIRPSFEEILNNPRSRSAKLRAILKI.

Residues glycine 30–tyrosine 32, aspartate 48, phenylalanine 75, aspartate 96, and glutamine 103 contribute to the S-adenosyl-L-methionine site.

It belongs to the methyltransferase superfamily. RsmH family.

The protein resides in the cytoplasm. It catalyses the reaction cytidine(1402) in 16S rRNA + S-adenosyl-L-methionine = N(4)-methylcytidine(1402) in 16S rRNA + S-adenosyl-L-homocysteine + H(+). Its function is as follows. Specifically methylates the N4 position of cytidine in position 1402 (C1402) of 16S rRNA. The sequence is that of Ribosomal RNA small subunit methyltransferase H from Ehrlichia chaffeensis (strain ATCC CRL-10679 / Arkansas).